A 177-amino-acid polypeptide reads, in one-letter code: ATP synthase subunit delta 1 (177 aa).

Belongs to the ATPase delta chain family. In terms of assembly, F-type ATPases have 2 components, F(1) - the catalytic core - and F(0) - the membrane proton channel. F(1) has five subunits: alpha(3), beta(3), gamma(1), delta(1), epsilon(1). F(0) has three main subunits: a(1), b(2) and c(10-14). The alpha and beta chains form an alternating ring which encloses part of the gamma chain. F(1) is attached to F(0) by a central stalk formed by the gamma and epsilon chains, while a peripheral stalk is formed by the delta and b chains.

The protein localises to the cell inner membrane. F(1)F(0) ATP synthase produces ATP from ADP in the presence of a proton or sodium gradient. F-type ATPases consist of two structural domains, F(1) containing the extramembraneous catalytic core and F(0) containing the membrane proton channel, linked together by a central stalk and a peripheral stalk. During catalysis, ATP synthesis in the catalytic domain of F(1) is coupled via a rotary mechanism of the central stalk subunits to proton translocation. Functionally, this protein is part of the stalk that links CF(0) to CF(1). It either transmits conformational changes from CF(0) to CF(1) or is implicated in proton conduction. This chain is ATP synthase subunit delta 1, found in Vibrio atlanticus (strain LGP32) (Vibrio splendidus (strain Mel32)).